The following is a 269-amino-acid chain: Transcription factor MYB7 (269 aa).

2 HTH myb-type domains span residues 9–61 and 62–116; these read KEHM…INYL and RPDL…KRKL. DNA-binding regions (H-T-H motif) lie at residues 37–61 and 89–112; these read WRSL…INYL and WSLI…NTHI.

In terms of assembly, interacts with SAD2. Expressed in anthers. Expressed in pollen grains and mature seeds. Expressed in roots and vasculature of leaves.

Its subcellular location is the nucleus. In terms of biological role, transcription factor involved in the negative regulation of flavonol biosynthesis. Represses the early phenylpropanoid genes, phenylalanine ammonia-lyase (PAL), cinnamate 4-hydroxylase (C4H) and 4-coumarate-CoA ligase (4CL), as well as the flavonoid-specific genes, flavonoid 3'-hydroxylase (F3'H) and dihydroflavonol 4-reductase (DFR). Plays a role in seed germination inhibition. Negatively regulates the expression of the abscisic acid (ABA) signaling transcription factor ABI5 in seeds. The protein is Transcription factor MYB7 of Arabidopsis thaliana (Mouse-ear cress).